We begin with the raw amino-acid sequence, 455 residues long: Retinoic acid receptor beta (455 aa).

Residues 1 to 87 (MTTSSRTCPV…PLPPPRVYKP (87 aa)) are modulating. The interval 45 to 78 (QSHPPTSGCSTPSPASVETQSTSSEELVPSPPSP) is disordered. Positions 47–66 (HPPTSGCSTPSPASVETQST) are enriched in polar residues. 2 NR C4-type zinc fingers span residues 88-108 (CFVCQDKSSGYHYGVSACEGC) and 124-148 (CHRDKNCVINKVTRNRCQYCRLQKC). The nuclear receptor DNA-binding region spans 88-153 (CFVCQDKSSG…RLQKCFEVGM (66 aa)). Positions 154–182 (SKESVRNDRNKKKKEPTKQESTENYEMTA) are hinge. The 235-residue stretch at 183-417 (ELDDLTEKIR…PLIQEMLENS (235 aa)) folds into the NR LBD domain. The tract at residues 416–455 (NSEGHEPLTPTSNGNTAEHSPSISPSSVDNSSVSQSPMVQ) is disordered. The span at 424-434 (TPTSNGNTAEH) shows a compositional bias: polar residues. Over residues 435 to 455 (SPSISPSSVDNSSVSQSPMVQ) the composition is skewed to low complexity.

The protein belongs to the nuclear hormone receptor family. NR1 subfamily. Heterodimer; with a RXR molecule. Binds DNA preferentially as a RAR/RXR heterodimer. In terms of tissue distribution, both isoforms expressed in heart, lung, kidney, liver, brain, lung and testis. Isoform Beta-1 is highly expressed in testes and brain. Levels increase during testes maturation. Isoform beta-2 is predominant in heart, kidney and lung.

The protein resides in the nucleus. In terms of biological role, receptor for retinoic acid. Retinoic acid receptors bind as heterodimers to their target response elements in response to their ligands, all-trans or 9-cis retinoic acid, and regulate gene expression in various biological processes. The RAR/RXR heterodimers bind to the retinoic acid response elements (RARE) composed of tandem 5'-AGGTCA-3' sites known as DR1-DR5. May be required for Sertoli cell differentiation and spermatogenesis. This is Retinoic acid receptor beta (RARB) from Coturnix japonica (Japanese quail).